The following is a 158-amino-acid chain: 6,7-dimethyl-8-ribityllumazine synthase (158 aa).

Residues Phe-23, 61-63 (SFE), and 85-87 (AVI) each bind 5-amino-6-(D-ribitylamino)uracil. 90-91 (ET) is a binding site for (2S)-2-hydroxy-3-oxobutyl phosphate. His-93 functions as the Proton donor in the catalytic mechanism. 5-amino-6-(D-ribitylamino)uracil is bound at residue Phe-118. Residue Arg-132 participates in (2S)-2-hydroxy-3-oxobutyl phosphate binding.

Belongs to the DMRL synthase family.

The enzyme catalyses (2S)-2-hydroxy-3-oxobutyl phosphate + 5-amino-6-(D-ribitylamino)uracil = 6,7-dimethyl-8-(1-D-ribityl)lumazine + phosphate + 2 H2O + H(+). The protein operates within cofactor biosynthesis; riboflavin biosynthesis; riboflavin from 2-hydroxy-3-oxobutyl phosphate and 5-amino-6-(D-ribitylamino)uracil: step 1/2. Catalyzes the formation of 6,7-dimethyl-8-ribityllumazine by condensation of 5-amino-6-(D-ribitylamino)uracil with 3,4-dihydroxy-2-butanone 4-phosphate. This is the penultimate step in the biosynthesis of riboflavin. This is 6,7-dimethyl-8-ribityllumazine synthase from Prochlorococcus marinus (strain AS9601).